The primary structure comprises 277 residues: Probable septum site-determining protein MinC (277 aa).

The disordered stretch occupies residues 107 to 168; the sequence is TEGLLPGRKG…ESGPQVSHYD (62 aa). Residues 122–142 show a composition bias toward basic and acidic residues; the sequence is GKPDGKAAEGRAPDHGTEGRA.

It belongs to the MinC family. As to quaternary structure, interacts with MinD and FtsZ.

Cell division inhibitor that blocks the formation of polar Z ring septums. Rapidly oscillates between the poles of the cell to destabilize FtsZ filaments that have formed before they mature into polar Z rings. Prevents FtsZ polymerization. The protein is Probable septum site-determining protein MinC of Mesorhizobium japonicum (strain LMG 29417 / CECT 9101 / MAFF 303099) (Mesorhizobium loti (strain MAFF 303099)).